The following is a 197-amino-acid chain: Molybdenum cofactor guanylyltransferase (197 aa).

Residues 10–12 (LAG), lysine 23, asparagine 51, aspartate 69, and aspartate 99 each bind GTP. Aspartate 99 lines the Mg(2+) pocket.

Belongs to the MobA family. Monomer. Mg(2+) is required as a cofactor.

The protein resides in the cytoplasm. The catalysed reaction is Mo-molybdopterin + GTP + H(+) = Mo-molybdopterin guanine dinucleotide + diphosphate. In terms of biological role, transfers a GMP moiety from GTP to Mo-molybdopterin (Mo-MPT) cofactor (Moco or molybdenum cofactor) to form Mo-molybdopterin guanine dinucleotide (Mo-MGD) cofactor. The chain is Molybdenum cofactor guanylyltransferase from Shewanella sp. (strain ANA-3).